A 134-amino-acid polypeptide reads, in one-letter code: Early E3B 14.9 kDa protein (134 aa).

The signal sequence occupies residues 1 to 19 (MQAMLPVILILLLPCIALA). Residues 54–78 (YWIVIVGIINILSCTFFSITIYPTF) form a helical membrane-spanning segment.

It belongs to the adenoviridae E3_14 family. Phosphorylated on serine; O-glycosylated, but not N-glycosylated.

Its subcellular location is the host membrane. Its function is as follows. Down-regulates the EGF receptor and prevents cytolysis by TNF. The sequence is that of Early E3B 14.9 kDa protein from Homo sapiens (Human).